A 360-amino-acid chain; its full sequence is Phenylalanine--tRNA ligase alpha subunit (360 aa).

E260 is a binding site for Mg(2+).

It belongs to the class-II aminoacyl-tRNA synthetase family. Phe-tRNA synthetase alpha subunit type 1 subfamily. Tetramer of two alpha and two beta subunits. Mg(2+) serves as cofactor.

Its subcellular location is the cytoplasm. It catalyses the reaction tRNA(Phe) + L-phenylalanine + ATP = L-phenylalanyl-tRNA(Phe) + AMP + diphosphate + H(+). The polypeptide is Phenylalanine--tRNA ligase alpha subunit (Methylobacterium radiotolerans (strain ATCC 27329 / DSM 1819 / JCM 2831 / NBRC 15690 / NCIMB 10815 / 0-1)).